Consider the following 1412-residue polypeptide: DNA-directed RNA polymerase subunit beta' (1412 aa).

Residues cysteine 70, cysteine 72, cysteine 85, and cysteine 88 each contribute to the Zn(2+) site. Residues aspartate 460, aspartate 462, and aspartate 464 each contribute to the Mg(2+) site. Positions 819, 893, 900, and 903 each coordinate Zn(2+). A disordered region spans residues 1391-1412; it reads AEESFEFGTPETPAAEQQHSGE.

It belongs to the RNA polymerase beta' chain family. The RNAP catalytic core consists of 2 alpha, 1 beta, 1 beta' and 1 omega subunit. When a sigma factor is associated with the core the holoenzyme is formed, which can initiate transcription. Mg(2+) serves as cofactor. Requires Zn(2+) as cofactor.

The enzyme catalyses RNA(n) + a ribonucleoside 5'-triphosphate = RNA(n+1) + diphosphate. Functionally, DNA-dependent RNA polymerase catalyzes the transcription of DNA into RNA using the four ribonucleoside triphosphates as substrates. The polypeptide is DNA-directed RNA polymerase subunit beta' (Paraburkholderia xenovorans (strain LB400)).